We begin with the raw amino-acid sequence, 466 residues long: MGDLTLRCMNCRSLLDIDSSLVDLSMAQRDLLLNSETNTDNSDNNKHNGENDRNIIPQEKLKIINQVKSPSQLRIGQAKNVTAESYVFLTDTEFSLTKFKNNGDEFVDDEDYDERNKTLSSRISALSNIFNILSCKSNIDYPVCQGCCDTLLEKLKEEYNQELKKRDTYHEFMKRIQEQNNSVEIYSDGNKGPKELKNLKREKEELLRQLQELEGENDLLQNDIQTLQSQLKEKQEQQLEQLREKNVQQMEHLSFIKDIQSLKNQRVVTLNHIDSLRKLNIYNETFRISHKGPFGTINELRLGSVPKIQVPWTEINAALGQVVLLLSLIVEKTSLPLPDYNLKPMGSTSVIEKRDLQTDQWFVLKAYGGSEFSLSSLFHKENPIDKALLAILEIIKKLSENVSSNTSEPASIELPYDISDDKINGLSILLKSSSPSLEWTTACKFLLTNIKWLLAFSTSRINKAKP.

A disordered region spans residues 35-55; it reads SETNTDNSDNNKHNGENDRNI. Over residues 43-53 the composition is skewed to basic and acidic residues; that stretch reads DNNKHNGENDR. The stretch at 149-258 forms a coiled coil; it reads DTLLEKLKEE…QMEHLSFIKD (110 aa). Residues 279-463 are BARA; it reads LNIYNETFRI…LAFSTSRINK (185 aa). Positions 439 to 464 are required for membrane-association, autophagic function during starvation and normal autophagosome morphology; sequence WTTACKFLLTNIKWLLAFSTSRINKA.

The protein belongs to the beclin family. As to quaternary structure, component of the autophagy-specific VPS34 PI3-kinase complex I; and of the VPS34 PI3-kinase complex II.

It localises to the endosome membrane. The protein resides in the vacuole membrane. Its subcellular location is the preautophagosomal structure membrane. Required for cytoplasm to vacuole transport (Cvt), autophagy, nucleophagy, and mitophagy, as a part of the autophagy-specific VPS34 PI3-kinase complex I. This complex is essential to recruit the ATG8-phosphatidylinositol conjugate and the ATG12-ATG5 conjugate to the pre-autophagosomal structure. Also involved in endosome-to-Golgi retrograde transport as part of the VPS34 PI3-kinase complex II. This is Vacuolar protein sorting-associated protein 30 from Kluyveromyces marxianus (strain DMKU3-1042 / BCC 29191 / NBRC 104275) (Yeast).